A 276-amino-acid chain; its full sequence is Dermonecrotic toxin LarSicTox-alphaIB2c (276 aa).

Residue His5 is part of the active site. Mg(2+) contacts are provided by Glu25 and Asp27. The Nucleophile role is filled by His41. Intrachain disulfides connect Cys45–Cys51 and Cys47–Cys190. Residue Asp85 coordinates Mg(2+). A glycan (N-linked (GlcNAc...) asparagine) is linked at Asn253.

Belongs to the arthropod phospholipase D family. Class II subfamily. It depends on Mg(2+) as a cofactor. As to expression, expressed by the venom gland.

The protein resides in the secreted. It carries out the reaction an N-(acyl)-sphingosylphosphocholine = an N-(acyl)-sphingosyl-1,3-cyclic phosphate + choline. The catalysed reaction is an N-(acyl)-sphingosylphosphoethanolamine = an N-(acyl)-sphingosyl-1,3-cyclic phosphate + ethanolamine. The enzyme catalyses a 1-acyl-sn-glycero-3-phosphocholine = a 1-acyl-sn-glycero-2,3-cyclic phosphate + choline. It catalyses the reaction a 1-acyl-sn-glycero-3-phosphoethanolamine = a 1-acyl-sn-glycero-2,3-cyclic phosphate + ethanolamine. In terms of biological role, dermonecrotic toxins cleave the phosphodiester linkage between the phosphate and headgroup of certain phospholipids (sphingolipid and lysolipid substrates), forming an alcohol (often choline) and a cyclic phosphate. This toxin acts on sphingomyelin (SM). It may also act on ceramide phosphoethanolamine (CPE), lysophosphatidylcholine (LPC) and lysophosphatidylethanolamine (LPE), but not on lysophosphatidylserine (LPS), and lysophosphatidylglycerol (LPG). It acts by transphosphatidylation, releasing exclusively cyclic phosphate products as second products. Induces dermonecrosis, hemolysis, increased vascular permeability, edema, inflammatory response, and platelet aggregation. The protein is Dermonecrotic toxin LarSicTox-alphaIB2c of Loxosceles arizonica (Arizona brown spider).